A 611-amino-acid polypeptide reads, in one-letter code: Protein decapping 5 (611 aa).

Positions 9–92 constitute a Sm domain; the sequence is KSSSAADSYV…IKDLQVKASP (84 aa). Disordered regions lie at residues 111-153, 183-238, 264-301, 318-362, 396-455, and 519-611; these read HYPS…AMPL, GLPQ…PSSL, SSSLQSTLQSAPSPSLASEMAPPLLSNKAPITAPPTLP, EAST…DKPK, QVSS…AGRS, and FFDS…NRTT. Composition is skewed to polar residues over residues 117-140 and 203-214; these read PTSGSLPSTASGSLPDISSHNGQP and NSLQQPLQYPNF. Over residues 264-281 the composition is skewed to low complexity; sequence SSSLQSTLQSAPSPSLAS. Composition is skewed to polar residues over residues 318–330, 396–413, and 424–437; these read EASTGLPLSNKPS, QVSSSAGLEQSVPVTSEA, and ARPTQKPNGHSFPN. Over residues 441–453 the composition is skewed to basic residues; the sequence is YRGRGRGRGRGAG. The region spanning 453–489 is the DFDF domain; sequence GRSHQVMKFTEDFDFTAMNEKFNKDEVWGHLGKSTTL. The short motif at 512–527 is the FFD box element; the sequence is PVYNKDDFFDSLSSNT. A compositionally biased stretch (basic and acidic residues) spans 528-547; that stretch reads IDRESQNSRPRFSEQRKLDT. A TFG box motif is present at residues 534 to 554; the sequence is NSRPRFSEQRKLDTETFGEFS. The segment covering 559–604 has biased composition (gly residues); the sequence is GRGGRGGYGRNNGYSRGGYGGRGYGGYGGRGGGGGGYGYGGRGQGR.

Belongs to the LSM14 family. As to quaternary structure, homodimer. Component of the decapping complex. Interacts with DCP1 and DCP2.

Its subcellular location is the cytoplasm. It is found in the P-body. In terms of biological role, as a component of the decapping complex, involved in the degradation of mRNAs. Promotes P-body formation. Translational repressor. In Arabidopsis thaliana (Mouse-ear cress), this protein is Protein decapping 5 (DCP5).